The sequence spans 83 residues: Exodeoxyribonuclease 7 small subunit (83 aa).

It belongs to the XseB family. Heterooligomer composed of large and small subunits.

The protein resides in the cytoplasm. It catalyses the reaction Exonucleolytic cleavage in either 5'- to 3'- or 3'- to 5'-direction to yield nucleoside 5'-phosphates.. In terms of biological role, bidirectionally degrades single-stranded DNA into large acid-insoluble oligonucleotides, which are then degraded further into small acid-soluble oligonucleotides. This is Exodeoxyribonuclease 7 small subunit from Bradyrhizobium sp. (strain ORS 278).